We begin with the raw amino-acid sequence, 385 residues long: tRNA-specific 2-thiouridylase MnmA (385 aa).

Residues 29–36 (GLSGGVDS) and Leu55 contribute to the ATP site. Residue Cys116 is the Nucleophile of the active site. A disulfide bridge links Cys116 with Cys225. An ATP-binding site is contributed by Gly141. The segment at 175–177 (KDQ) is interaction with tRNA. Cys225 (cysteine persulfide intermediate) is an active-site residue. The segment at 330–331 (RY) is interaction with tRNA.

The protein belongs to the MnmA/TRMU family.

The protein localises to the cytoplasm. It catalyses the reaction S-sulfanyl-L-cysteinyl-[protein] + uridine(34) in tRNA + AH2 + ATP = 2-thiouridine(34) in tRNA + L-cysteinyl-[protein] + A + AMP + diphosphate + H(+). Its function is as follows. Catalyzes the 2-thiolation of uridine at the wobble position (U34) of tRNA, leading to the formation of s(2)U34. The protein is tRNA-specific 2-thiouridylase MnmA of Prochlorococcus marinus (strain AS9601).